The sequence spans 100 residues: Apolipoprotein C-II (100 aa).

The N-terminal stretch at 1-25 (MDARSLLLLWLLLPLLLLLGCEVQG) is a signal peptide. The tract at residues 65–73 (AVDETIRDI) is lipid binding. A lipoprotein lipase cofactor region spans residues 77 to 100 (GSAAISTYTGILTDQILTMLQGKQ).

The protein belongs to the apolipoprotein C2 family. Proapolipoprotein C-II is synthesized as a sialic acid containing glycoprotein which is subsequently desialylated prior to its proteolytic processing. In terms of processing, proapolipoprotein C-II, the major form found in plasma undergoes proteolytic cleavage of its N-terminal hexapeptide to generate apolipoprotein C-II, which occurs as the minor form in plasma. In terms of tissue distribution, liver.

The protein localises to the secreted. Its function is as follows. Component of chylomicrons, very low-density lipoproteins (VLDL), low-density lipoproteins (LDL), and high-density lipoproteins (HDL) in plasma. Plays an important role in lipoprotein metabolism as an activator of lipoprotein lipase. Both proapolipoprotein C-II and apolipoprotein C-II can activate lipoprotein lipase. The polypeptide is Apolipoprotein C-II (APOC2) (Cavia porcellus (Guinea pig)).